We begin with the raw amino-acid sequence, 839 residues long: Oligopeptide transporter phomP2 (839 aa).

The segment at 1 to 58 (MEADPKVPFTDEMNIQDEHNWESGSWSSSRRSNDSNVTLLSRRSSVEQHEDERQKDSD) is disordered. A compositionally biased stretch (low complexity) spans 23–36 (SGSWSSSRRSNDSN). Residues Asn33 and Asn36 are each glycosylated (N-linked (GlcNAc...) asparagine). Residues 44–58 (SSVEQHEDERQKDSD) are compositionally biased toward basic and acidic residues. Transmembrane regions (helical) follow at residues 105–125 (VWLL…VYYF), 177–197 (ALVV…GPLS), 210–230 (PWAI…VGLY), 268–288 (VFMA…FVFP), 315–335 (GFGL…SPLF), and 345–365 (FVGA…SDAL). Residues Asn386 and Asn398 are each glycosylated (N-linked (GlcNAc...) asparagine). 4 helical membrane passes run 415–435 (AMHF…AVLF), 478–498 (AWYA…LYAG), 505–525 (WGLQ…GMLF), and 585–605 (WELL…NWAV). Gly residues predominate over residues 629–646 (QGLGLGQGGGGGGGGGGQ). The tract at residues 629-654 (QGLGLGQGGGGGGGGGGQQQRAAGAH) is disordered. 3 consecutive transmembrane segments (helical) span residues 665–685 (NFFS…FGGG), 697–717 (WLLP…WLIH), and 728–748 (WPLH…FPTT). The N-linked (GlcNAc...) asparagine glycan is linked to Asn749. A helical transmembrane segment spans residues 781-801 (AGLDCGAQLVQMVLGVAFLVF).

This sequence belongs to the oligopeptide OPT transporter family.

It is found in the membrane. Oligopeptide transporter; part of the gene cluster that mediates the biosynthesis of the phomopsins, a group of hexapeptide mycotoxins which infects lupins and causes lupinosis disease in livestock. In Diaporthe leptostromiformis (Lupinosis disease fungus), this protein is Oligopeptide transporter phomP2.